Here is a 198-residue protein sequence, read N- to C-terminus: 7-methyl-GTP pyrophosphatase (198 aa).

The active-site Proton acceptor is aspartate 72.

Belongs to the Maf family. YceF subfamily. The cofactor is a divalent metal cation.

Its subcellular location is the cytoplasm. It catalyses the reaction N(7)-methyl-GTP + H2O = N(7)-methyl-GMP + diphosphate + H(+). In terms of biological role, nucleoside triphosphate pyrophosphatase that hydrolyzes 7-methyl-GTP (m(7)GTP). May have a dual role in cell division arrest and in preventing the incorporation of modified nucleotides into cellular nucleic acids. This is 7-methyl-GTP pyrophosphatase from Idiomarina loihiensis (strain ATCC BAA-735 / DSM 15497 / L2-TR).